The sequence spans 157 residues: 2-C-methyl-D-erythritol 2,4-cyclodiphosphate synthase (157 aa).

3 residues coordinate a divalent metal cation: aspartate 8, histidine 10, and histidine 42. Aspartate 8–histidine 10 is a 4-CDP-2-C-methyl-D-erythritol 2-phosphate binding site. 4-CDP-2-C-methyl-D-erythritol 2-phosphate-binding positions include aspartate 56–glycine 58, serine 132–glutamate 135, phenylalanine 139, and arginine 142.

Belongs to the IspF family. As to quaternary structure, homotrimer. Requires a divalent metal cation as cofactor.

It catalyses the reaction 4-CDP-2-C-methyl-D-erythritol 2-phosphate = 2-C-methyl-D-erythritol 2,4-cyclic diphosphate + CMP. Its pathway is isoprenoid biosynthesis; isopentenyl diphosphate biosynthesis via DXP pathway; isopentenyl diphosphate from 1-deoxy-D-xylulose 5-phosphate: step 4/6. In terms of biological role, involved in the biosynthesis of isopentenyl diphosphate (IPP) and dimethylallyl diphosphate (DMAPP), two major building blocks of isoprenoid compounds. Catalyzes the conversion of 4-diphosphocytidyl-2-C-methyl-D-erythritol 2-phosphate (CDP-ME2P) to 2-C-methyl-D-erythritol 2,4-cyclodiphosphate (ME-CPP) with a corresponding release of cytidine 5-monophosphate (CMP). This chain is 2-C-methyl-D-erythritol 2,4-cyclodiphosphate synthase, found in Dehalococcoides mccartyi (strain CBDB1).